We begin with the raw amino-acid sequence, 64 residues long: Large ribosomal subunit protein bL35 (64 aa).

The protein belongs to the bacterial ribosomal protein bL35 family.

The polypeptide is Large ribosomal subunit protein bL35 (Pseudomonas savastanoi pv. phaseolicola (strain 1448A / Race 6) (Pseudomonas syringae pv. phaseolicola (strain 1448A / Race 6))).